Reading from the N-terminus, the 73-residue chain is MAKKDGVIELEGSVLEALPNATFRVELSNGHKVLAHISGRMRQHYIRILPEDRVVVELSPYDLARGRIVYRYK.

One can recognise an S1-like domain in the interval 1-73; that stretch reads MAKKDGVIEL…ARGRIVYRYK (73 aa).

This sequence belongs to the IF-1 family. In terms of assembly, component of the 30S ribosomal translation pre-initiation complex which assembles on the 30S ribosome in the order IF-2 and IF-3, IF-1 and N-formylmethionyl-tRNA(fMet); mRNA recruitment can occur at any time during PIC assembly.

It localises to the cytoplasm. One of the essential components for the initiation of protein synthesis. Stabilizes the binding of IF-2 and IF-3 on the 30S subunit to which N-formylmethionyl-tRNA(fMet) subsequently binds. Helps modulate mRNA selection, yielding the 30S pre-initiation complex (PIC). Upon addition of the 50S ribosomal subunit IF-1, IF-2 and IF-3 are released leaving the mature 70S translation initiation complex. In Tropheryma whipplei (strain TW08/27) (Whipple's bacillus), this protein is Translation initiation factor IF-1.